A 325-amino-acid polypeptide reads, in one-letter code: 5-dehydro-2-deoxygluconokinase (325 aa).

The protein belongs to the carbohydrate kinase PfkB family.

The catalysed reaction is 5-dehydro-2-deoxy-D-gluconate + ATP = 6-phospho-5-dehydro-2-deoxy-D-gluconate + ADP + H(+). It participates in polyol metabolism; myo-inositol degradation into acetyl-CoA; acetyl-CoA from myo-inositol: step 5/7. Its function is as follows. Catalyzes the phosphorylation of 5-dehydro-2-deoxy-D-gluconate (2-deoxy-5-keto-D-gluconate or DKG) to 6-phospho-5-dehydro-2-deoxy-D-gluconate (DKGP). The chain is 5-dehydro-2-deoxygluconokinase (iolC) from Bacillus subtilis (strain 168).